A 270-amino-acid polypeptide reads, in one-letter code: Chymotrypsin-like elastase family member 3A (270 aa).

Positions 1–15 (MMLRLLSSLLLVAVA) form a signal peptide, or 16. Positions 16–28 (SGYGPPSSHSSSR) are cleaved as a propeptide — activation peptide. Residues 29 to 268 (VVHGEDAVPY…FIDWIEETIA (240 aa)) enclose the Peptidase S1 domain. Cys-58 and Cys-74 are oxidised to a cystine. His-73 functions as the Charge relay system in the catalytic mechanism. The N-linked (GlcNAc...) asparagine glycan is linked to Asn-114. A disulfide bridge links Cys-117 with Cys-120. Residue Asp-123 is the Charge relay system of the active site. Disulfide bonds link Cys-157-Cys-223, Cys-188-Cys-204, and Cys-213-Cys-244. The active-site Charge relay system is Ser-217.

The protein belongs to the peptidase S1 family. Elastase subfamily.

The enzyme catalyses Preferential cleavage: Ala-|-Xaa. Does not hydrolyze elastin.. Functionally, efficient protease with alanine specificity but only little elastolytic activity. The protein is Chymotrypsin-like elastase family member 3A (CELA3A) of Homo sapiens (Human).